A 161-amino-acid polypeptide reads, in one-letter code: Nucleotide-binding protein PputGB1_4497 (161 aa).

The protein belongs to the YajQ family.

Functionally, nucleotide-binding protein. The protein is Nucleotide-binding protein PputGB1_4497 of Pseudomonas putida (strain GB-1).